The chain runs to 179 residues: ATP synthase subunit delta (179 aa).

Belongs to the ATPase delta chain family. F-type ATPases have 2 components, F(1) - the catalytic core - and F(0) - the membrane proton channel. F(1) has five subunits: alpha(3), beta(3), gamma(1), delta(1), epsilon(1). F(0) has three main subunits: a(1), b(2) and c(10-14). The alpha and beta chains form an alternating ring which encloses part of the gamma chain. F(1) is attached to F(0) by a central stalk formed by the gamma and epsilon chains, while a peripheral stalk is formed by the delta and b chains.

It localises to the cell membrane. Functionally, f(1)F(0) ATP synthase produces ATP from ADP in the presence of a proton or sodium gradient. F-type ATPases consist of two structural domains, F(1) containing the extramembraneous catalytic core and F(0) containing the membrane proton channel, linked together by a central stalk and a peripheral stalk. During catalysis, ATP synthesis in the catalytic domain of F(1) is coupled via a rotary mechanism of the central stalk subunits to proton translocation. This protein is part of the stalk that links CF(0) to CF(1). It either transmits conformational changes from CF(0) to CF(1) or is implicated in proton conduction. This chain is ATP synthase subunit delta, found in Clostridium botulinum (strain Langeland / NCTC 10281 / Type F).